Here is an 86-residue protein sequence, read N- to C-terminus: MVDEKAEVIKKFRTADNDTGSAFVQVALFTRRINNLTRHLQGFKKDYSSRLGLLKIISKRRRLLNYLAKNDCQGCKNLMEMLDIRK.

Belongs to the universal ribosomal protein uS15 family. As to quaternary structure, part of the 30S ribosomal subunit. Forms a bridge to the 50S subunit in the 70S ribosome, contacting the 23S rRNA.

One of the primary rRNA binding proteins, it binds directly to 16S rRNA where it helps nucleate assembly of the platform of the 30S subunit by binding and bridging several RNA helices of the 16S rRNA. Its function is as follows. Forms an intersubunit bridge (bridge B4) with the 23S rRNA of the 50S subunit in the ribosome. The polypeptide is Small ribosomal subunit protein uS15 (Neorickettsia sennetsu (strain ATCC VR-367 / Miyayama) (Ehrlichia sennetsu)).